We begin with the raw amino-acid sequence, 61 residues long: Metallothionein-1C (61 aa).

Residues 1 to 29 (MDPNCSCSTGSSCSCAGSCTCKACRCPSC) are beta. Cys-5, Cys-7, Cys-13, Cys-15, Cys-19, Cys-21, Cys-24, Cys-26, Cys-29, Cys-33, Cys-34, Cys-36, Cys-37, Cys-41, Cys-44, Cys-48, Cys-50, Cys-57, Cys-59, and Cys-60 together coordinate a divalent metal cation. Positions 30-61 (KKSCCSCCPVGCAKCAQGCICKGASDKCSCCA) are alpha.

Belongs to the metallothionein superfamily. Type 1 family.

In terms of biological role, metallothioneins have a high content of cysteine residues that bind various heavy metals; these proteins are transcriptionally regulated by both heavy metals and glucocorticoids. The chain is Metallothionein-1C (MT1C) from Ovis aries (Sheep).